Consider the following 425-residue polypeptide: Serine--tRNA ligase (425 aa).

233-235 contributes to the L-serine binding site; the sequence is TAE. 264-266 contacts ATP; the sequence is RAE. E287 contacts L-serine. 351 to 354 is an ATP binding site; it reads EISS. S387 lines the L-serine pocket.

Belongs to the class-II aminoacyl-tRNA synthetase family. Type-1 seryl-tRNA synthetase subfamily. In terms of assembly, homodimer. The tRNA molecule binds across the dimer.

It is found in the cytoplasm. The enzyme catalyses tRNA(Ser) + L-serine + ATP = L-seryl-tRNA(Ser) + AMP + diphosphate + H(+). The catalysed reaction is tRNA(Sec) + L-serine + ATP = L-seryl-tRNA(Sec) + AMP + diphosphate + H(+). It participates in aminoacyl-tRNA biosynthesis; selenocysteinyl-tRNA(Sec) biosynthesis; L-seryl-tRNA(Sec) from L-serine and tRNA(Sec): step 1/1. In terms of biological role, catalyzes the attachment of serine to tRNA(Ser). Is also able to aminoacylate tRNA(Sec) with serine, to form the misacylated tRNA L-seryl-tRNA(Sec), which will be further converted into selenocysteinyl-tRNA(Sec). The chain is Serine--tRNA ligase from Clostridium perfringens (strain 13 / Type A).